A 266-amino-acid polypeptide reads, in one-letter code: GTP cyclohydrolase III (266 aa).

This sequence belongs to the archaeal-type GTP cyclohydrolase family.

It catalyses the reaction GTP + 3 H2O = 2-amino-5-formylamino-6-(5-phospho-D-ribosylamino)pyrimidin-4(3H)-one + 2 phosphate + 2 H(+). Catalyzes the formation of 2-amino-5-formylamino-6-ribofuranosylamino-4(3H)-pyrimidinone ribonucleotide monophosphate and inorganic phosphate from GTP. Also has an independent pyrophosphate phosphohydrolase activity. The polypeptide is GTP cyclohydrolase III (Methanococcus maripaludis (strain C7 / ATCC BAA-1331)).